Consider the following 65-residue polypeptide: Small, acid-soluble spore protein Tlp (65 aa).

It belongs to the Tlp family.

Its subcellular location is the spore core. This Bacillus anthracis (strain A0248) protein is Small, acid-soluble spore protein Tlp.